Here is a 127-residue protein sequence, read N- to C-terminus: Small ribosomal subunit protein uS13 (127 aa).

The segment covering leucine 96 to valine 118 has biased composition (basic residues). Residues leucine 96–arginine 127 are disordered.

This sequence belongs to the universal ribosomal protein uS13 family. In terms of assembly, part of the 30S ribosomal subunit. Forms a loose heterodimer with protein S19. Forms two bridges to the 50S subunit in the 70S ribosome.

Located at the top of the head of the 30S subunit, it contacts several helices of the 16S rRNA. In the 70S ribosome it contacts the 23S rRNA (bridge B1a) and protein L5 of the 50S subunit (bridge B1b), connecting the 2 subunits; these bridges are implicated in subunit movement. Contacts the tRNAs in the A and P-sites. This chain is Small ribosomal subunit protein uS13, found in Myxococcus xanthus (strain DK1622).